The sequence spans 349 residues: DNA repair protein XRCC3 (349 aa).

The residue at position 1 (Met-1) is an N-acetylmethionine. An ATP-binding site is contributed by 107–114 (GCSSAGKT).

It belongs to the RecA family. RAD51 subfamily. As to quaternary structure, interacts with RAD51C and RAD51. Part of the CX3 complex consisting of RAD51C and XRCC3; the complex has a ring-like structure arranged into a flat disc around a central channel; CX3 can interact with RAD51 in vitro. Forms a complex with FANCD2, BRCA2 and phosphorylated FANCG. Interacts with SWSAP1 and ZSWIM7; involved in homologous recombination repair. Interacts directly with PALB2 which may serve as a scaffold for a HR complex containing PALB2, BRCA2, RAD51C, RAD51 and XRCC3.

Its subcellular location is the nucleus. It localises to the cytoplasm. It is found in the perinuclear region. The protein resides in the mitochondrion matrix. Functionally, involved in the homologous recombination repair (HRR) pathway of double-stranded DNA, thought to repair chromosomal fragmentation, translocations and deletions. Part of the RAD21 paralog protein complex CX3 which acts in the BRCA1-BRCA2-dependent HR pathway. Upon DNA damage, CX3 acts downstream of RAD51 recruitment; the complex binds predominantly to the intersection of the four duplex arms of the Holliday junction (HJ) and to junctions of replication forks. Involved in HJ resolution and thus in processing HR intermediates late in the DNA repair process; the function may be linked to the CX3 complex and seems to involve GEN1 during mitotic cell cycle progression. Part of a PALB2-scaffolded HR complex containing BRCA2 and RAD51C and which is thought to play a role in DNA repair by HR. Plays a role in regulating mitochondrial DNA copy number under conditions of oxidative stress in the presence of RAD51 and RAD51C. This chain is DNA repair protein XRCC3 (Xrcc3), found in Mus musculus (Mouse).